The following is a 232-amino-acid chain: MSVRILVVDDDRAVRESLRRSLSFNGYTVELAHDGVEALEMIASDRPDALVLDVMMPRLDGLEVCRQLRSTGDDLPILVLTARDSVSERVAGLDAGADDYLPKPFALEELLARMRALLRRTKLEDDEAADSVAMTFSDLSLDPVTREVTRGARRISLTRTEFALLEMLIANPRRVLTRSRILEEVWGFDFPTSGNALEVYVGYLRRKTEAEGEPRLIHTVRGVGYVLRETPP.

Residues 4–118 form the Response regulatory domain; that stretch reads RILVVDDDRA…ELLARMRALL (115 aa). D48 is subject to 4-aspartylphosphate. Positions 131 to 229 form a DNA-binding region, ompR/PhoB-type; that stretch reads SVAMTFSDLS…VRGVGYVLRE (99 aa).

In terms of processing, phosphorylated and dephosphorylated by MprB.

Its subcellular location is the cytoplasm. Its function is as follows. Member of the two-component regulatory system MprB/MprA which contributes to maintaining a balance among several systems involved in stress resistance and is required for establishment and maintenance of persistent infection in the host. Functions as a transcriptional regulator that recognizes a 19-bp nucleotide motif comprizing two loosely conserved 8-bp direct DNA-binding motif repeats separated by a 3-bp spacer region. This chain is Response regulator MprA (mprA), found in Mycobacterium ulcerans (strain Agy99).